The primary structure comprises 362 residues: Ribosome-binding ATPase YchF (362 aa).

The region spanning 2–258 (LSAGIVGLPN…LDANGRQDWL (257 aa)) is the OBG-type G domain. 11–16 (NVGKST) is an ATP binding site. Serine 15 and threonine 35 together coordinate Mg(2+). Residues 281–347 (GLWSFFTFGK…EAKKQGLVRL (67 aa)) enclose the TGS domain.

Belongs to the TRAFAC class OBG-HflX-like GTPase superfamily. OBG GTPase family. YchF/OLA1 subfamily. Requires Mg(2+) as cofactor.

In terms of biological role, ATPase that binds to both the 70S ribosome and the 50S ribosomal subunit in a nucleotide-independent manner. This is Ribosome-binding ATPase YchF from Mycoplasma pneumoniae (strain ATCC 29342 / M129 / Subtype 1) (Mycoplasmoides pneumoniae).